An 883-amino-acid chain; its full sequence is Phosphoenolpyruvate carboxylase (883 aa).

Active-site residues include histidine 138 and lysine 546.

Belongs to the PEPCase type 1 family. The cofactor is Mg(2+).

The enzyme catalyses oxaloacetate + phosphate = phosphoenolpyruvate + hydrogencarbonate. Its function is as follows. Forms oxaloacetate, a four-carbon dicarboxylic acid source for the tricarboxylic acid cycle. The polypeptide is Phosphoenolpyruvate carboxylase (Escherichia coli (strain 55989 / EAEC)).